We begin with the raw amino-acid sequence, 711 residues long: Putative membrane protein IgaA homolog (711 aa).

Residue M1 is a topological domain, periplasmic. The helical transmembrane segment at 2-22 (STIVIFLAALLACSLLAGWLI) threads the bilayer. The Cytoplasmic segment spans residues 23-204 (KVRSRRRQLP…YALSRPRGLR (182 aa)). The next 2 helical transmembrane spans lie at 205 to 225 (EALL…TPDV) and 226 to 246 (FVPW…WGLF). The Cytoplasmic portion of the chain corresponds to 247-339 (APPAKSSLRE…KNFPLQHWLR (93 aa)). The chain crosses the membrane as a helical span at residues 340 to 360 (STIIAAGSLLVLFMLLFWIPL). Over 361 to 655 (DMPLKFTLSW…IPDRSGLWRY (295 aa)) the chain is Periplasmic. Residues 656–676 (LSTTLLLLTMLGSAIYNGVQA) traverse the membrane as a helical segment. Over 677–711 (WRRYQRHRTRMMEIQAYYESCLNPQLITPSESLIE) the chain is Cytoplasmic.

This sequence belongs to the IgaA family.

It is found in the cell inner membrane. This is Putative membrane protein IgaA homolog (yrfF) from Escherichia coli (strain K12).